A 597-amino-acid polypeptide reads, in one-letter code: Peptidyl-prolyl cis-trans isomerase-like 2 (597 aa).

The region spanning 41–114 (KKLPFNFCAA…TTDSDENKGD (74 aa)) is the U-box domain. The region spanning 328–483 (NKGYVRMETN…NKIVIKDMII (156 aa)) is the PPIase cyclophilin-type domain. Residues 495–519 (KKQKEGEEERKREVARQGGTEDDRT) show a composition bias toward basic and acidic residues. 2 disordered regions span residues 495 to 521 (KKQK…RTTW) and 560 to 597 (ATTT…FDGW).

Belongs to the cyclophilin-type PPIase family. PPIL2 subfamily.

It localises to the nucleus. The catalysed reaction is [protein]-peptidylproline (omega=180) = [protein]-peptidylproline (omega=0). It carries out the reaction S-ubiquitinyl-[E2 ubiquitin-conjugating enzyme]-L-cysteine + [acceptor protein]-L-lysine = [E2 ubiquitin-conjugating enzyme]-L-cysteine + N(6)-ubiquitinyl-[acceptor protein]-L-lysine.. It participates in protein modification; protein ubiquitination. Functionally, may catalyze the cis-trans isomerization of proline imidic peptide bonds in oligopeptides thereby assisting the folding of proteins. May also function as a chaperone, playing a role in intracellular transport of proteins. May also have a protein ubiquitin ligase activity acting as an E3 ubiquitin protein ligase or as a ubiquitin-ubiquitin ligase promoting elongation of ubiquitin chains on proteins. This Neurospora crassa (strain ATCC 24698 / 74-OR23-1A / CBS 708.71 / DSM 1257 / FGSC 987) protein is Peptidyl-prolyl cis-trans isomerase-like 2 (ppi-2).